Reading from the N-terminus, the 280-residue chain is Hydroxyacylglutathione hydrolase, mitochondrial (280 aa).

Residue K61 is modified to N6-acetyllysine. 4 residues coordinate Zn(2+): H74, H76, D78, and H79. K88 is modified (N6-acetyllysine). 2 residues coordinate Zn(2+): H130 and D154. Substrate is bound by residues 163–165 (KFY) and 193–195 (HEY). Position 193 (H193) interacts with Zn(2+). K201 carries the post-translational modification N6-acetyllysine; alternate. K201 carries the post-translational modification N6-succinyllysine; alternate. 269-272 (RREK) contacts substrate.

Belongs to the metallo-beta-lactamase superfamily. Glyoxalase II family. As to quaternary structure, monomer. Zn(2+) serves as cofactor. Testis.

The protein resides in the mitochondrion matrix. The protein localises to the cytoplasm. The catalysed reaction is an S-(2-hydroxyacyl)glutathione + H2O = a 2-hydroxy carboxylate + glutathione + H(+). It catalyses the reaction (R)-S-lactoylglutathione + H2O = (R)-lactate + glutathione + H(+). It functions in the pathway secondary metabolite metabolism; methylglyoxal degradation; (R)-lactate from methylglyoxal: step 2/2. Thiolesterase that catalyzes the hydrolysis of S-D-lactoyl-glutathione to form glutathione and D-lactic acid. The sequence is that of Hydroxyacylglutathione hydrolase, mitochondrial (HAGH) from Callithrix jacchus (White-tufted-ear marmoset).